A 201-amino-acid polypeptide reads, in one-letter code: Lipopolysaccharide core heptose(II)-phosphate phosphatase (201 aa).

Residues 1 to 33 (MLAFTLRFIKNKRYFAILAGALVIIAGLASQHA) form the signal peptide.

Belongs to the phosphoglycerate mutase family. Ais subfamily.

The protein localises to the periplasm. Its pathway is bacterial outer membrane biogenesis; lipopolysaccharide metabolism. Functionally, catalyzes the dephosphorylation of heptose(II) of the outer membrane lipopolysaccharide core. The sequence is that of Lipopolysaccharide core heptose(II)-phosphate phosphatase from Salmonella typhi.